The following is a 735-amino-acid chain: Post-transcriptional regulator MKT1 (735 aa).

The interaction with PBP1 stretch occupies residues 475-722 (QVIYNTMEET…ANERMKRAQK (248 aa)).

It belongs to the XPG/RAD2 endonuclease family. Forms a complex composed of at least MKT1, PBP1, XAC1 and LSM12. Within the complex, interacts (via C-terminus) with PBP1; the interaction is direct. Interacts with RNA-binding protein ZC3H11 (via MKT1-binding motif); the interaction is direct. May interact with RNA-binding proteins CFB1 and CFB2. Interacts with the EIF4E6-EIF4G5 translation initiation complex via EIF4G5; the interaction with EIF4G5 is direct.

It localises to the cytoplasm. The protein resides in the cytosol. It is found in the stress granule. In terms of biological role, involved in post-transcriptional regulation of gene expression. Promotes mRNA stabilization by recruiting a complex containing PBP1, LSM12 and XAC1 to mRNAs. Recruited to mRNAs by sequence-specific RNA binding proteins. May regulate translation through interactions with the EIF4E6-EIF4G5 translation initiation complex. This chain is Post-transcriptional regulator MKT1, found in Trypanosoma brucei brucei (strain 927/4 GUTat10.1).